Reading from the N-terminus, the 110-residue chain is Lichenan-specific phosphotransferase enzyme IIA component (110 aa).

A PTS EIIA type-3 domain is found at 3–101; the sequence is EEMEQIIFQI…AAEIIELYEK (99 aa). Residue histidine 77 is the Tele-phosphohistidine intermediate; by HPr of the active site.

It is found in the cytoplasm. The phosphoenolpyruvate-dependent sugar phosphotransferase system (PTS), a major carbohydrate active -transport system, catalyzes the phosphorylation of incoming sugar substrates concomitant with their translocation across the cell membrane. This system is involved in lichenan transport. In Bacillus subtilis (strain 168), this protein is Lichenan-specific phosphotransferase enzyme IIA component (licA).